A 190-amino-acid chain; its full sequence is Holliday junction branch migration complex subunit RuvA (190 aa).

Residues 1–64 (MIGKLTGTLL…EDAQLLYGFG (64 aa)) are domain I. Residues 65–137 (TAQERQAFRE…LKGKLGADVG (73 aa)) form a domain II region. The tract at residues 137 to 141 (GVRAH) is flexible linker. The tract at residues 142–190 (AANDNQADILQALLALGYNDKEAAAALKALPADVGVSEGIKLALKSLSK) is domain III.

Belongs to the RuvA family. As to quaternary structure, homotetramer. Forms an RuvA(8)-RuvB(12)-Holliday junction (HJ) complex. HJ DNA is sandwiched between 2 RuvA tetramers; dsDNA enters through RuvA and exits via RuvB. An RuvB hexamer assembles on each DNA strand where it exits the tetramer. Each RuvB hexamer is contacted by two RuvA subunits (via domain III) on 2 adjacent RuvB subunits; this complex drives branch migration. In the full resolvosome a probable DNA-RuvA(4)-RuvB(12)-RuvC(2) complex forms which resolves the HJ.

The protein resides in the cytoplasm. The RuvA-RuvB-RuvC complex processes Holliday junction (HJ) DNA during genetic recombination and DNA repair, while the RuvA-RuvB complex plays an important role in the rescue of blocked DNA replication forks via replication fork reversal (RFR). RuvA specifically binds to HJ cruciform DNA, conferring on it an open structure. The RuvB hexamer acts as an ATP-dependent pump, pulling dsDNA into and through the RuvAB complex. HJ branch migration allows RuvC to scan DNA until it finds its consensus sequence, where it cleaves and resolves the cruciform DNA. This Acidovorax sp. (strain JS42) protein is Holliday junction branch migration complex subunit RuvA.